The chain runs to 120 residues: Small ribosomal subunit protein uS13 (120 aa).

The segment at 93 to 120 is disordered; it reads GLPVRGQNTKNNARTRKGPRRTVANKKK. Over residues 105 to 120 the composition is skewed to basic residues; the sequence is ARTRKGPRRTVANKKK.

This sequence belongs to the universal ribosomal protein uS13 family. Part of the 30S ribosomal subunit. Has been shown to cross-link to S19 forming a loose heterodimer. Forms two bridges to the 50S subunit in the 70S ribosome.

Its function is as follows. Located at the top of the head of the 30S subunit, it contacts several helices of the 16S rRNA. In the 70S ribosome it contacts the 23S rRNA (bridge B1a) and protein L5 of the 50S subunit (bridge B1b), connecting the 2 subunits; these bridges are implicated in subunit movement. Contacts the tRNA in the A and P-sites. The protein is Small ribosomal subunit protein uS13 (rpsM) of Geobacillus stearothermophilus (Bacillus stearothermophilus).